The primary structure comprises 325 residues: Acetyl-coenzyme A carboxylase carboxyl transferase subunit alpha (325 aa).

In terms of domain architecture, CoA carboxyltransferase C-terminal spans 38 to 292 (RLEDRLAKLQ…DETLKQSLKT (255 aa)).

This sequence belongs to the AccA family. Acetyl-CoA carboxylase is a heterohexamer composed of biotin carboxyl carrier protein (AccB), biotin carboxylase (AccC) and two subunits each of ACCase subunit alpha (AccA) and ACCase subunit beta (AccD).

Its subcellular location is the cytoplasm. It carries out the reaction N(6)-carboxybiotinyl-L-lysyl-[protein] + acetyl-CoA = N(6)-biotinyl-L-lysyl-[protein] + malonyl-CoA. Its pathway is lipid metabolism; malonyl-CoA biosynthesis; malonyl-CoA from acetyl-CoA: step 1/1. Its activity is regulated as follows. Inhibited by pyrrolidine dione antibiotics moiramide B (CPD1) and CPD2. Component of the acetyl coenzyme A carboxylase (ACC) complex. First, biotin carboxylase catalyzes the carboxylation of biotin on its carrier protein (BCCP) and then the CO(2) group is transferred by the carboxyltransferase to acetyl-CoA to form malonyl-CoA. In Bacillus subtilis (strain 168), this protein is Acetyl-coenzyme A carboxylase carboxyl transferase subunit alpha.